Here is a 201-residue protein sequence, read N- to C-terminus: GTP cyclohydrolase 1 (201 aa).

3 residues coordinate Zn(2+): Cys-90, His-93, and Cys-163.

This sequence belongs to the GTP cyclohydrolase I family. In terms of assembly, toroid-shaped homodecamer, composed of two pentamers of five dimers.

The enzyme catalyses GTP + H2O = 7,8-dihydroneopterin 3'-triphosphate + formate + H(+). It participates in cofactor biosynthesis; 7,8-dihydroneopterin triphosphate biosynthesis; 7,8-dihydroneopterin triphosphate from GTP: step 1/1. This Streptomyces avermitilis (strain ATCC 31267 / DSM 46492 / JCM 5070 / NBRC 14893 / NCIMB 12804 / NRRL 8165 / MA-4680) protein is GTP cyclohydrolase 1.